Reading from the N-terminus, the 302-residue chain is Potassium/proton antiporter CemA (302 aa).

4 helical membrane-spanning segments follow: residues 55-75, 187-207, 225-247, and 262-282; these read VFVS…ITFL, FVSF…IIIL, FLLI…ELFL, and FIFL…KYWI.

The protein belongs to the CemA family.

The protein resides in the plastid. It is found in the chloroplast inner membrane. The enzyme catalyses K(+)(in) + H(+)(out) = K(+)(out) + H(+)(in). Its function is as follows. Contributes to K(+)/H(+) antiport activity by supporting proton efflux to control proton extrusion and homeostasis in chloroplasts in a light-dependent manner to modulate photosynthesis. Prevents excessive induction of non-photochemical quenching (NPQ) under continuous-light conditions. Indirectly promotes efficient inorganic carbon uptake into chloroplasts. The chain is Potassium/proton antiporter CemA from Tupiella akineta (Green alga).